We begin with the raw amino-acid sequence, 207 residues long: Large ribosomal subunit protein uL4 (207 aa).

Residues 52–76 (KNTSLVSGGGKKPWKQKGTGRARQG) form a disordered region.

It belongs to the universal ribosomal protein uL4 family. As to quaternary structure, part of the 50S ribosomal subunit.

In terms of biological role, one of the primary rRNA binding proteins, this protein initially binds near the 5'-end of the 23S rRNA. It is important during the early stages of 50S assembly. It makes multiple contacts with different domains of the 23S rRNA in the assembled 50S subunit and ribosome. Forms part of the polypeptide exit tunnel. This is Large ribosomal subunit protein uL4 from Myxococcus xanthus (strain DK1622).